The primary structure comprises 349 residues: Isopentenyl-diphosphate delta-isomerase (349 aa).

Substrate is bound at residue 6–7 (RK). FMN contacts are provided by residues 62-64 (AMT), S93, and N122. Substrate is bound at residue Q152. E153 contacts Mg(2+). FMN contacts are provided by residues K184, T214, 258 to 259 (GG), and 280 to 281 (AG).

Belongs to the IPP isomerase type 2 family. In terms of assembly, homooctamer. Dimer of tetramers. FMN serves as cofactor. The cofactor is NADPH. It depends on Mg(2+) as a cofactor.

It is found in the cytoplasm. The catalysed reaction is isopentenyl diphosphate = dimethylallyl diphosphate. Involved in the biosynthesis of isoprenoids. Catalyzes the 1,3-allylic rearrangement of the homoallylic substrate isopentenyl (IPP) to its allylic isomer, dimethylallyl diphosphate (DMAPP). This Bacillus thuringiensis subsp. konkukian (strain 97-27) protein is Isopentenyl-diphosphate delta-isomerase.